Here is a 205-residue protein sequence, read N- to C-terminus: Urease accessory protein UreE (205 aa).

Positions 171–192 are enriched in basic and acidic residues; sequence HHGHSHSHDHDHDHDHDHDHQH. Residues 171–205 are disordered; the sequence is HHGHSHSHDHDHDHDHDHDHQHGPCCSHGHHHGHR.

Belongs to the UreE family.

It localises to the cytoplasm. Functionally, involved in urease metallocenter assembly. Binds nickel. Probably functions as a nickel donor during metallocenter assembly. This chain is Urease accessory protein UreE, found in Burkholderia pseudomallei (strain K96243).